Reading from the N-terminus, the 85-residue chain is Large ribosomal subunit protein bL27 (85 aa).

Residues 1-21 (MAHKKAGGSTRNGRDSNAQRL) are disordered. Over residues 9 to 19 (STRNGRDSNAQ) the composition is skewed to polar residues.

This sequence belongs to the bacterial ribosomal protein bL27 family.

The chain is Large ribosomal subunit protein bL27 from Pectobacterium carotovorum subsp. carotovorum (strain PC1).